A 645-amino-acid polypeptide reads, in one-letter code: Zinc finger protein 235 (645 aa).

The KRAB domain occupies valine 8 to arginine 86. Disordered regions lie at residues glycine 112–serine 144 and lysine 255–proline 280. Over residues leucine 129 to serine 144 the composition is skewed to polar residues. C2H2-type zinc fingers lie at residues tyrosine 285–histidine 307, tyrosine 313–histidine 335, tyrosine 341–histidine 363, tyrosine 369–histidine 391, tyrosine 397–histidine 419, tyrosine 425–histidine 447, phenylalanine 453–histidine 475, tyrosine 481–histidine 503, tyrosine 509–histidine 531, phenylalanine 537–histidine 559, tyrosine 565–histidine 587, phenylalanine 593–histidine 615, and tyrosine 621–histidine 643.

Belongs to the krueppel C2H2-type zinc-finger protein family.

It is found in the nucleus. May be involved in transcriptional regulation. This is Zinc finger protein 235 (Znf235) from Mus musculus (Mouse).